A 253-amino-acid polypeptide reads, in one-letter code: Triosephosphate isomerase (253 aa).

Residue 9–11 (NWK) coordinates substrate. Catalysis depends on H95, which acts as the Electrophile. E167 serves as the catalytic Proton acceptor. Substrate-binding positions include G173, S213, and 234–235 (GG). S213 is subject to Phosphoserine.

This sequence belongs to the triosephosphate isomerase family. Homodimer.

It is found in the cytoplasm. It carries out the reaction D-glyceraldehyde 3-phosphate = dihydroxyacetone phosphate. It functions in the pathway carbohydrate biosynthesis; gluconeogenesis. It participates in carbohydrate degradation; glycolysis; D-glyceraldehyde 3-phosphate from glycerone phosphate: step 1/1. Its function is as follows. Involved in the gluconeogenesis. Catalyzes stereospecifically the conversion of dihydroxyacetone phosphate (DHAP) to D-glyceraldehyde-3-phosphate (G3P). This chain is Triosephosphate isomerase, found in Bacillus pumilus (strain SAFR-032).